A 601-amino-acid chain; its full sequence is Elongation factor 4 (601 aa).

The 183-residue stretch at 7–189 (DRIRNFSIIA…ALVTRLPAPK (183 aa)) folds into the tr-type G domain. GTP-binding positions include 19 to 24 (DHGKST) and 136 to 139 (NKVD).

The protein belongs to the TRAFAC class translation factor GTPase superfamily. Classic translation factor GTPase family. LepA subfamily.

The protein localises to the cell inner membrane. It catalyses the reaction GTP + H2O = GDP + phosphate + H(+). Required for accurate and efficient protein synthesis under certain stress conditions. May act as a fidelity factor of the translation reaction, by catalyzing a one-codon backward translocation of tRNAs on improperly translocated ribosomes. Back-translocation proceeds from a post-translocation (POST) complex to a pre-translocation (PRE) complex, thus giving elongation factor G a second chance to translocate the tRNAs correctly. Binds to ribosomes in a GTP-dependent manner. The sequence is that of Elongation factor 4 from Granulibacter bethesdensis (strain ATCC BAA-1260 / CGDNIH1).